The primary structure comprises 37 residues: Large ribosomal subunit protein bL36 (37 aa).

This sequence belongs to the bacterial ribosomal protein bL36 family.

In Mycoplasma pneumoniae (strain ATCC 29342 / M129 / Subtype 1) (Mycoplasmoides pneumoniae), this protein is Large ribosomal subunit protein bL36.